The primary structure comprises 81 residues: Costars family protein ABRACL (81 aa).

It belongs to the costars family.

This is Costars family protein ABRACL from Salmo salar (Atlantic salmon).